The primary structure comprises 591 residues: V-type ATP synthase alpha chain (591 aa).

Gly232–Thr239 contacts ATP.

Belongs to the ATPase alpha/beta chains family.

The catalysed reaction is ATP + H2O + 4 H(+)(in) = ADP + phosphate + 5 H(+)(out). Produces ATP from ADP in the presence of a proton gradient across the membrane. The V-type alpha chain is a catalytic subunit. The protein is V-type ATP synthase alpha chain of Clostridium perfringens (strain ATCC 13124 / DSM 756 / JCM 1290 / NCIMB 6125 / NCTC 8237 / Type A).